The chain runs to 421 residues: Leucine-rich repeat-containing protein 42 (421 aa).

LRR repeat units follow at residues 149-170, 174-195, 202-222, 234-255, and 259-280; these read VLCS…EEIK, ELTR…LEHL, SVTQ…RKMT, NLAL…GYLF, and KLNC…KDKL. Residues 376–406 are disordered; sequence PLLSQESKKSKKRAFKESEQEQSSPQSAKQK. The span at 396-406 shows a compositional bias: low complexity; the sequence is EQSSPQSAKQK. At serine 399 the chain carries Phosphoserine.

The protein belongs to the LRRC42 family.

The sequence is that of Leucine-rich repeat-containing protein 42 (Lrrc42) from Mus musculus (Mouse).